A 189-amino-acid polypeptide reads, in one-letter code: Testis-expressed protein 22 (189 aa).

Positions 1–120 (MDSRQQRPQR…TQSVPTPPLQ (120 aa)) are disordered. Low complexity predominate over residues 14–24 (QWQLAQEQRQQ). The span at 70–87 (IDERRRLALQRMQERTDT) shows a compositional bias: basic and acidic residues. Over residues 103-114 (QQTETSPSTQSV) the composition is skewed to low complexity.

Mainly expressed in spermatocytes and spermatids in testis.

The protein localises to the cytoplasm. It is found in the cytoplasmic vesicle. The protein resides in the secretory vesicle. Its subcellular location is the acrosome. This Mus musculus (Mouse) protein is Testis-expressed protein 22 (Tex22).